Consider the following 147-residue polypeptide: Hemoglobin subunit beta-A/B (147 aa).

A Globin domain is found at 2-147 (EWTDAERSAI…VVNALKRQYH (146 aa)). Heme b-binding residues include His-63 and His-92.

The protein belongs to the globin family. Heterotetramer of two alpha chains and two beta chains. In terms of tissue distribution, red blood cells.

In terms of biological role, involved in oxygen transport from gills to the various peripheral tissues. The chain is Hemoglobin subunit beta-A/B from Cyprinus carpio (Common carp).